The chain runs to 157 residues: MHILGIDPGSRKCGYAIISYASNKLSLITAGFINITTTHLQEQILDLIEALDCLLDRYEVHEVAIEDIFFGYNPKSVIKLAQFRGALSLKILERVGNFSEYTPLQVKKALTGNGKAAKEQVAFMVKRLLHITSEIKPLDISDAIAVAIMHAQRLKLY.

Active-site residues include D7, E66, and D139. Positions 7, 66, and 139 each coordinate Mg(2+).

The protein belongs to the RuvC family. Homodimer which binds Holliday junction (HJ) DNA. The HJ becomes 2-fold symmetrical on binding to RuvC with unstacked arms; it has a different conformation from HJ DNA in complex with RuvA. In the full resolvosome a probable DNA-RuvA(4)-RuvB(12)-RuvC(2) complex forms which resolves the HJ. Mg(2+) serves as cofactor.

The protein resides in the cytoplasm. The catalysed reaction is Endonucleolytic cleavage at a junction such as a reciprocal single-stranded crossover between two homologous DNA duplexes (Holliday junction).. In terms of biological role, the RuvA-RuvB-RuvC complex processes Holliday junction (HJ) DNA during genetic recombination and DNA repair. Endonuclease that resolves HJ intermediates. Cleaves cruciform DNA by making single-stranded nicks across the HJ at symmetrical positions within the homologous arms, yielding a 5'-phosphate and a 3'-hydroxyl group; requires a central core of homology in the junction. The consensus cleavage sequence is 5'-(A/T)TT(C/G)-3'. Cleavage occurs on the 3'-side of the TT dinucleotide at the point of strand exchange. HJ branch migration catalyzed by RuvA-RuvB allows RuvC to scan DNA until it finds its consensus sequence, where it cleaves and resolves the cruciform DNA. This is Crossover junction endodeoxyribonuclease RuvC from Helicobacter acinonychis (strain Sheeba).